We begin with the raw amino-acid sequence, 856 residues long: Putative zinc protease C28F5.4 (856 aa).

Residue His71 participates in Zn(2+) binding. Glu74 acts as the Proton acceptor in catalysis. Residues His75 and Glu152 each contribute to the Zn(2+) site.

This sequence belongs to the peptidase M16 family.

The protein is Putative zinc protease C28F5.4 of Caenorhabditis elegans.